The following is a 110-amino-acid chain: Phosphoribosyl-ATP pyrophosphatase (110 aa).

It belongs to the PRA-PH family.

It is found in the cytoplasm. The enzyme catalyses 1-(5-phospho-beta-D-ribosyl)-ATP + H2O = 1-(5-phospho-beta-D-ribosyl)-5'-AMP + diphosphate + H(+). The protein operates within amino-acid biosynthesis; L-histidine biosynthesis; L-histidine from 5-phospho-alpha-D-ribose 1-diphosphate: step 2/9. The sequence is that of Phosphoribosyl-ATP pyrophosphatase from Pseudomonas syringae pv. tomato (strain ATCC BAA-871 / DC3000).